The sequence spans 333 residues: Cilia- and flagella-associated protein 119 (333 aa).

Residues 1-10 (MITPSSSQSL) show a composition bias toward polar residues. Disordered regions lie at residues 1–70 (MITP…ANLF) and 309–333 (RLSS…TKTK). Position 34 is a phosphoserine (Ser-34). Polar residues predominate over residues 44–58 (TDMQTESPAEATSSP). Positions 284–319 (IKSQLSKELRQLQQLVEERLKESEERLSSKLAALEQ) form a coiled coil.

Its subcellular location is the cell projection. It is found in the cilium. It localises to the flagellum. The protein localises to the cytoplasmic vesicle. The protein resides in the secretory vesicle. Its subcellular location is the acrosome. It is found in the cytoplasm. This is Cilia- and flagella-associated protein 119 from Mus musculus (Mouse).